Reading from the N-terminus, the 472-residue chain is Succinate-semialdehyde dehydrogenase [NADP(+)] (472 aa).

NADP(+) is bound by residues 134–135 (WN), 158–161 (KHAS), and 210–211 (GS). Catalysis depends on E232, which acts as the Proton acceptor. Residue L233 coordinates NADP(+). C266 serves as the catalytic Nucleophile. E363 is an NADP(+) binding site.

Belongs to the aldehyde dehydrogenase family.

The enzyme catalyses succinate semialdehyde + NADP(+) + H2O = succinate + NADPH + 2 H(+). Its function is as follows. Catalyzes the NADP(+)-dependent oxidation of succinate semialdehyde to succinate. It is believed to be the main source of succinate semialdehyde dehydrogenase activity in Mycobacterium. The chain is Succinate-semialdehyde dehydrogenase [NADP(+)] (gabD1) from Mycobacterium avium (strain 104).